The primary structure comprises 208 residues: Putative 3-methyladenine DNA glycosylase (208 aa).

This sequence belongs to the DNA glycosylase MPG family.

In Nitrobacter winogradskyi (strain ATCC 25391 / DSM 10237 / CIP 104748 / NCIMB 11846 / Nb-255), this protein is Putative 3-methyladenine DNA glycosylase.